A 243-amino-acid chain; its full sequence is UPF0246 protein MGAS10750_Spy1880 (243 aa).

This sequence belongs to the UPF0246 family.

This is UPF0246 protein MGAS10750_Spy1880 from Streptococcus pyogenes serotype M4 (strain MGAS10750).